The primary structure comprises 807 residues: MNTVLFVILLAAIGSNHGLIDERLTVNRMGYGVMFDKVSEIIDGGGIVHFSHTWSLIIPTYTIPSVENIDCTLLNAELTPICDSINNLIDSANTETYNSITDAKLRMAKALDVIPKSKPEDLINIDLGANLETTTTAAPQTGNRRRRRAAGDEPNTDDNTPPNLEIPDWLDPDKDNSDWEILIPGRLAGNLFTSIFDMPGSGTLKNSVRNLKALGGAIYTNTQSIINLNDQFAYIIQTTDKRMDEIQEMGDILVRKIAQTRASMVTFQNEFSAIYGNMSARILMLNKLKSMVVSNLYPDLFRMKVLGKDIETLCDMWTYGLINLASGYISPQLITETMMKHVIDHIVRNIIPQPTYNRFNLLSTDPAFYYKMKKMLSYARTADKVIVTINIPLYRTEGRMPLYRIYSFPIPLTMGTEDTSDKGYTKMADLPDFIAVDSNTDAYVEMTQAAYLSCSGAVSGIQSCGNAVGVTKRRDVTDMTCAFAIFIDDTTAIGKFCQTAYSDVGPVGSARQLASDSSFLISSGEDTDSFWTVNCPKSTINPISKVVPCNLCRMEISCGCSLSASHFKLNPRIGGCEKSLEGVPKTTKIYSRNMAAVTEFVTDEDLKLVNSYSARVDKLYPPIKMEKLEFKTYDNVEAYAEKSRKYGQDFIKGAELMKKNLTIYKDKVDEGLKKARDFSDQVVDREGSIINAISGLFTDIFGGEVWAVIAAIFSPVFLTAFALIISLINFIPAVRYDYKQYKKEKREKRYEEQRLALLGEADDEMKDSYGNYVKYSLPYNAATYVDIVVDEIIDPVTGERQVISRTN.

Residues 1–18 (MNTVLFVILLAAIGSNHG) form the signal peptide. Residues 19–704 (LIDERLTVNR…GLFTDIFGGE (686 aa)) lie on the Extracellular side of the membrane. Residues 133 to 142 (TTTTAAPQTG) are compositionally biased toward polar residues. The tract at residues 133–171 (TTTTAAPQTGNRRRRRAAGDEPNTDDNTPPNLEIPDWLD) is disordered. 2 N-linked (GlcNAc...) asparagine; by host glycosylation sites follow: N277 and N660. A helical membrane pass occupies residues 705–725 (VWAVIAAIFSPVFLTAFALII). The Cytoplasmic segment spans residues 726–807 (SLINFIPAVR…GERQVISRTN (82 aa)).

The protein localises to the host membrane. This is an uncharacterized protein from Magallana gigas (Pacific oyster).